Reading from the N-terminus, the 1291-residue chain is DNA-directed RNA polymerase subunit beta' (1291 aa).

Zn(2+) is bound by residues cysteine 60, cysteine 62, cysteine 75, and cysteine 78. 3 residues coordinate Mg(2+): aspartate 535, aspartate 537, and aspartate 539. Positions 874, 951, 958, and 961 each coordinate Zn(2+).

Belongs to the RNA polymerase beta' chain family. As to quaternary structure, the RNAP catalytic core consists of 2 alpha, 1 beta, 1 beta' and 1 omega subunit. When a sigma factor is associated with the core the holoenzyme is formed, which can initiate transcription. Mg(2+) is required as a cofactor. Requires Zn(2+) as cofactor.

The catalysed reaction is RNA(n) + a ribonucleoside 5'-triphosphate = RNA(n+1) + diphosphate. In terms of biological role, DNA-dependent RNA polymerase catalyzes the transcription of DNA into RNA using the four ribonucleoside triphosphates as substrates. The chain is DNA-directed RNA polymerase subunit beta' from Leifsonia xyli subsp. xyli (strain CTCB07).